Reading from the N-terminus, the 238-residue chain is Probable septum site-determining protein MinC (238 aa).

The protein belongs to the MinC family. In terms of assembly, interacts with MinD and FtsZ.

Cell division inhibitor that blocks the formation of polar Z ring septums. Rapidly oscillates between the poles of the cell to destabilize FtsZ filaments that have formed before they mature into polar Z rings. Prevents FtsZ polymerization. The sequence is that of Probable septum site-determining protein MinC from Blochmanniella floridana.